The sequence spans 337 residues: UPF0252 protein PH1321 (337 aa).

The helical transmembrane segment at 100-120 (IIGMLFLVFIILPAITSNLWS) threads the bilayer.

This sequence belongs to the UPF0252 family.

It localises to the membrane. The protein is UPF0252 protein PH1321 of Pyrococcus horikoshii (strain ATCC 700860 / DSM 12428 / JCM 9974 / NBRC 100139 / OT-3).